Consider the following 327-residue polypeptide: Zinc transport protein ZntB (327 aa).

The Cytoplasmic portion of the chain corresponds to 1–273 (MEAIKGSDVN…ARRTYTMSLM (273 aa)). Residues 274 to 294 (AMVFLPSTFLTGLFGVNLGGI) traverse the membrane as a helical segment. At 295–300 (PGGGWQ) the chain is on the periplasmic side. A helical membrane pass occupies residues 301 to 321 (FGFSIFCILLVVLIGGVALWL). The Cytoplasmic segment spans residues 322–327 (HRSKWL).

Belongs to the CorA metal ion transporter (MIT) (TC 1.A.35) family.

Its subcellular location is the cell inner membrane. The enzyme catalyses Zn(2+)(out) + H(+)(out) = Zn(2+)(in) + H(+)(in). Zinc transporter. Acts as a Zn(2+):proton symporter, which likely mediates zinc ion uptake. The sequence is that of Zinc transport protein ZntB from Escherichia coli O8 (strain IAI1).